Reading from the N-terminus, the 150-residue chain is Ribonuclease H (150 aa).

The 142-residue stretch at E7–M148 folds into the RNase H type-1 domain. Positions 16, 54, 76, and 140 each coordinate Mg(2+).

Belongs to the RNase H family. As to quaternary structure, monomer. It depends on Mg(2+) as a cofactor.

The protein localises to the cytoplasm. It carries out the reaction Endonucleolytic cleavage to 5'-phosphomonoester.. Endonuclease that specifically degrades the RNA of RNA-DNA hybrids. In Granulibacter bethesdensis (strain ATCC BAA-1260 / CGDNIH1), this protein is Ribonuclease H.